A 132-amino-acid polypeptide reads, in one-letter code: Gamma-crystallin-5 (132 aa).

The Beta/gamma crystallin 'Greek key' 2 domain maps to 1-40; it reads ILYEQPSYRGHQYYLWKGEYPDFQRWMGFNDSIRSCRMSP. The tract at residues 41-45 is connecting peptide; sequence YHQGQ. 2 consecutive Beta/gamma crystallin 'Greek key' domains span residues 46-86 and 87-129; these read YKMR…NVFD and GNWM…RRVH.

The protein belongs to the beta/gamma-crystallin family. Monomer.

Functionally, crystallins are the dominant structural components of the vertebrate eye lens. The sequence is that of Gamma-crystallin-5 (cryg5) from Xenopus laevis (African clawed frog).